The chain runs to 306 residues: UDP-N-acetylenolpyruvoylglucosamine reductase (306 aa).

An FAD-binding PCMH-type domain is found at 29–193 (RVGGPADWLF…IRASLRGTPD (165 aa)). The active site involves arginine 173. The active-site Proton donor is the serine 222. The active site involves glutamate 292.

Belongs to the MurB family. Requires FAD as cofactor.

The protein resides in the cytoplasm. The catalysed reaction is UDP-N-acetyl-alpha-D-muramate + NADP(+) = UDP-N-acetyl-3-O-(1-carboxyvinyl)-alpha-D-glucosamine + NADPH + H(+). Its pathway is cell wall biogenesis; peptidoglycan biosynthesis. Its function is as follows. Cell wall formation. This Gluconobacter oxydans (strain 621H) (Gluconobacter suboxydans) protein is UDP-N-acetylenolpyruvoylglucosamine reductase.